The primary structure comprises 126 residues: Nuclear transport factor 2B (126 aa).

Serine 2 carries the post-translational modification N-acetylserine. The region spanning 9–123 (VSKAFVEHYY…FYVFNDIFRL (115 aa)) is the NTF2 domain.

As to quaternary structure, interacts with RAN1. Expressed in roots, stems, leaves and flowers, and, at low levels, in siliques.

It is found in the cytoplasm. The protein localises to the nucleus. It localises to the nucleus envelope. In terms of biological role, facilitates protein transport into the nucleus. Interacts with various nucleoporins and with Ran-GDP. Could be part of a multicomponent system of cytosolic factors that assemble at the pore complex during nuclear import. The protein is Nuclear transport factor 2B of Arabidopsis thaliana (Mouse-ear cress).